The sequence spans 395 residues: Glutamate N-acetyltransferase (395 aa).

Positions 146, 169, 180, 263, 390, and 395 each coordinate substrate. The Nucleophile role is filled by T180.

Belongs to the ArgJ family. Heterotetramer of two alpha and two beta chains.

The protein resides in the cytoplasm. It carries out the reaction N(2)-acetyl-L-ornithine + L-glutamate = N-acetyl-L-glutamate + L-ornithine. It participates in amino-acid biosynthesis; L-arginine biosynthesis; L-ornithine and N-acetyl-L-glutamate from L-glutamate and N(2)-acetyl-L-ornithine (cyclic): step 1/1. Catalyzes the transfer of the acetyl group from N(2)-acetylornithine to glutamate, forming N-acetylglutamate and L-ornithine. In Methanosarcina acetivorans (strain ATCC 35395 / DSM 2834 / JCM 12185 / C2A), this protein is Glutamate N-acetyltransferase.